The chain runs to 147 residues: SPI-1 type 3 secretion system pilotin (147 aa).

A signal peptide spans 1-15 (MKKFYSCLPVFLLIG). Cys-16 carries N-palmitoyl cysteine lipidation. The S-diacylglycerol cysteine moiety is linked to residue Cys-16.

Belongs to the InvH family.

The protein localises to the cell outer membrane. In terms of biological role, involved in the synthesis of the type III secretion system (T3SS), also called injectisome, which is used to inject bacterial effector proteins into eukaryotic host cells. Pilot protein that is required for the proper localization of the secretin InvG/SctC in the outer membrane. Necessary for efficient adherence and entry of these organisms into cultured epithelial cells. The polypeptide is SPI-1 type 3 secretion system pilotin (Salmonella typhimurium (strain SL1344)).